The chain runs to 261 residues: Transmembrane protein 187 (261 aa).

Transmembrane regions (helical) follow at residues 8-28 (AFVH…TGIF), 43-63 (APVA…VNMA), 88-108 (VFAA…WTQW), 113-133 (VLDQ…CLYL), 140-162 (WLFL…HPQG), and 190-210 (SATY…LKLC).

As to expression, ubiquitous.

It localises to the membrane. In Homo sapiens (Human), this protein is Transmembrane protein 187 (TMEM187).